Reading from the N-terminus, the 462-residue chain is NAD-capped RNA hydrolase NUDT12 (462 aa).

ANK repeat units lie at residues 11 to 40 (EIVTQFHCSAAEGDIAKLTGILSHSPSLLN), 45 to 74 (NGWTALMYAARNGHPEIVQFLLEKGCDRSI), and 78 to 98 (SRQTALDIAVFWGYKHIANLL). The residue at position 185 (K185) is an N6-succinyllysine. The Zn(2+) site is built by C284 and C287. K292 carries the N6-succinyllysine modification. Residues C302 and C307 each coordinate Zn(2+). Substrate is bound by residues Y318, 354 to 356 (AGF), E370, E374, and E415. Positions 319 to 453 (PRVDPVVIMQ…SRAIAHQLIK (135 aa)) constitute a Nudix hydrolase domain. 4 residues coordinate Mg(2+): A354, E370, E374, and E415. A Nudix box motif is present at residues 355 to 376 (GFIEPGETIEDAVRREVEEESG). Positions 460 to 462 (PNL) match the Microbody targeting signal motif.

The protein belongs to the Nudix hydrolase family. NudC subfamily. As to quaternary structure, homodimer. Homodimerization is essential for its catalytic activity and protein stability. Interacts (via ANK repeats) with BLMH. The cofactor is Mg(2+). Zn(2+) is required as a cofactor.

Its subcellular location is the cytoplasm. The protein resides in the peroxisome. It localises to the cytoplasmic granule. The enzyme catalyses a 5'-end NAD(+)-phospho-ribonucleoside in mRNA + H2O = a 5'-end phospho-adenosine-phospho-ribonucleoside in mRNA + beta-nicotinamide D-ribonucleotide + 2 H(+). It catalyses the reaction NAD(+) + H2O = beta-nicotinamide D-ribonucleotide + AMP + 2 H(+). The catalysed reaction is NADH + H2O = reduced beta-nicotinamide D-ribonucleotide + AMP + 2 H(+). It carries out the reaction NADPH + H2O = reduced beta-nicotinamide D-ribonucleotide + adenosine 2',5'-bisphosphate + 2 H(+). In terms of biological role, mRNA decapping enzyme that specifically removes the nicotinamide adenine dinucleotide (NAD) cap from a subset of mRNAs by hydrolyzing the diphosphate linkage to produce nicotinamide mononucleotide (NMN) and 5' monophosphate mRNA. The NAD-cap is present at the 5'-end of some RNAs; in contrast to the canonical N7 methylguanosine (m7G) cap, the NAD cap promotes mRNA decay. Preferentially acts on NAD-capped transcripts in response to nutrient stress. Also acts on free nicotinamide adenine dinucleotide molecules: hydrolyzes NAD(H) into NMN(H) and AMP, and NADPH into NMNH and 2',5'-ADP. May act to regulate the concentration of peroxisomal nicotinamide nucleotide cofactors required for oxidative metabolism in this organelle. Regulates the levels of circadian clock components PER1, PER2, PER3 and CRY2 in the liver. The chain is NAD-capped RNA hydrolase NUDT12 from Homo sapiens (Human).